The primary structure comprises 189 residues: Isopentenyl-diphosphate Delta-isomerase (189 aa).

2 residues coordinate Mn(2+): His-27 and His-34. The 140-residue stretch at 32–171 (PLHFAFSTYI…PFVFSPWMVD (140 aa)) folds into the Nudix hydrolase domain. The active site involves Cys-69. His-71 lines the Mn(2+) pocket. Residue Glu-89 participates in Mg(2+) binding. Mn(2+) is bound by residues Glu-119 and Glu-121. The active site involves Glu-121.

This sequence belongs to the IPP isomerase type 1 family. The cofactor is Mg(2+). Mn(2+) serves as cofactor.

It is found in the cytoplasm. It catalyses the reaction isopentenyl diphosphate = dimethylallyl diphosphate. It functions in the pathway isoprenoid biosynthesis; dimethylallyl diphosphate biosynthesis; dimethylallyl diphosphate from isopentenyl diphosphate: step 1/1. In terms of biological role, catalyzes the 1,3-allylic rearrangement of the homoallylic substrate isopentenyl (IPP) to its highly electrophilic allylic isomer, dimethylallyl diphosphate (DMAPP). In Corynebacterium glutamicum (strain R), this protein is Isopentenyl-diphosphate Delta-isomerase.